The chain runs to 573 residues: Acetolactate synthase large subunit (573 aa).

E51 is a binding site for thiamine diphosphate. Residues R153, H261–R282, and D304–N323 each bind FAD. The tract at residues Q396–F476 is thiamine pyrophosphate binding. Residues D447 and N474 each contribute to the Mg(2+) site.

The protein belongs to the TPP enzyme family. Dimer of large and small chains. Mg(2+) serves as cofactor. It depends on thiamine diphosphate as a cofactor.

It carries out the reaction 2 pyruvate + H(+) = (2S)-2-acetolactate + CO2. It participates in amino-acid biosynthesis; L-isoleucine biosynthesis; L-isoleucine from 2-oxobutanoate: step 1/4. Its pathway is amino-acid biosynthesis; L-valine biosynthesis; L-valine from pyruvate: step 1/4. The polypeptide is Acetolactate synthase large subunit (ilvI) (Haemophilus influenzae (strain ATCC 51907 / DSM 11121 / KW20 / Rd)).